The following is a 364-amino-acid chain: O-methyltransferase 1 (364 aa).

Positions 183, 207, 230, 250, and 264 each coordinate S-adenosyl-L-homocysteine. Asp-230 lines the S-adenosyl-L-methionine pocket. The active-site Proton acceptor is the His-268.

It belongs to the class I-like SAM-binding methyltransferase superfamily. Cation-independent O-methyltransferase family. As to quaternary structure, homodimer.

The catalysed reaction is dopamine + S-adenosyl-L-methionine = 3-methoxytyramine + S-adenosyl-L-homocysteine + H(+). The enzyme catalyses 3,4-dihydroxy-5-methoxyphenethylamine + S-adenosyl-L-methionine = 4-hydroxy-3,5-dimethoxyphenethylamine + S-adenosyl-L-homocysteine + H(+). It functions in the pathway aromatic compound metabolism. Its pathway is alkaloid biosynthesis. Functionally, O-methyltransferase participating in the biosynthesis of natural products derived from phenylethylamine, including mescaline, a natural hallucinogen potentially used in psychotherapeutic treatments. Catalyzes the O-methylation of mescaline meta hydroxyl groups, using dopamine and 3,4-dihydroxy-5-methoxyphenethylamine as substrates. This is O-methyltransferase 1 from Lophophora williamsii (Peyote).